The following is a 359-amino-acid chain: Type-1 angiotensin II receptor (359 aa).

Residues 1 to 25 (MILNSSTEDSIKRIQDDCPKAGRHN) are Extracellular-facing. Asn-4 carries N-linked (GlcNAc...) asparagine glycosylation. The angiotensin II site is built by Gln-15 and Asp-17. Disulfide bonds link Cys-18–Cys-274 and Cys-101–Cys-180. The chain crosses the membrane as a helical span at residues 26–55 (YIFVMIPTLYSIIFVVGIFGNSLVVIVIYF). The Cytoplasmic segment spans residues 56–61 (YMKLKT). A helical transmembrane segment spans residues 62–89 (VASVFLLNLALADLCFLLTLPLWAVYTA). The Extracellular segment spans residues 90–98 (MEYRWPFGN). Residues 99-125 (YLCKIASASVSFNLYASVFLLTCLSID) form a helical membrane-spanning segment. Topologically, residues 126–141 (RYLAIVHPMKSRLRRT) are cytoplasmic. The helical transmembrane segment at 142 to 165 (MLVAKVTCIIIWLLAGLASLPTII) threads the bilayer. The Extracellular portion of the chain corresponds to 166–190 (HRNVFFIENTNITVCAFHYESQNST). Arg-167 contacts angiotensin II. Asn-176 carries an N-linked (GlcNAc...) asparagine glycan. Positions 182, 183, and 184 each coordinate angiotensin II. Residue Asn-188 is glycosylated (N-linked (GlcNAc...) asparagine). The chain crosses the membrane as a helical span at residues 191–216 (LPVGLGLTKNILGFLFPFLIILTSYT). Lys-199 serves as a coordination point for angiotensin II. Residues 217 to 239 (LIWKALKKAYEIQKNKPRNDDIF) lie on the Cytoplasmic side of the membrane. The helical transmembrane segment at 240–268 (KIIMAIVLFFFFSWVPHQIFTFLDVLIQL) threads the bilayer. Topologically, residues 269-278 (GIIHDCKIAD) are extracellular. Residues 279-304 (IVDTAMPITICLAYFNNCLNPLFYGF) form a helical membrane-spanning segment. The Cytoplasmic portion of the chain corresponds to 305 to 359 (LGKKFKKYFLQLLKYIPPKAKSHSSLSTKMSTLSYRPSENGSSSTKKSAPCTEVE). The interval 326–359 (SHSSLSTKMSTLSYRPSENGSSSTKKSAPCTEVE) is disordered. Positions 327–351 (HSSLSTKMSTLSYRPSENGSSSTKK) are enriched in polar residues. The S-palmitoyl cysteine moiety is linked to residue Cys-355.

Belongs to the G-protein coupled receptor 1 family. Interacts with MAS1. Interacts with ARRB1. Interacts with FLNA (via filamin repeat 21); increases PKA-mediated phosphorylation of FLNA. Post-translationally, C-terminal Ser or Thr residues may be phosphorylated.

It localises to the cell membrane. In terms of biological role, receptor for angiotensin II, a vasoconstricting peptide, which acts as a key regulator of blood pressure and sodium retention by the kidney. The activated receptor in turn couples to G-alpha proteins G(q) (GNAQ, GNA11, GNA14 or GNA15) and thus activates phospholipase C and increases the cytosolic Ca(2+) concentrations, which in turn triggers cellular responses such as stimulation of protein kinase C. This Sus scrofa (Pig) protein is Type-1 angiotensin II receptor (AGTR1).